The following is a 97-amino-acid chain: Sperm protein associated with the nucleus on the X chromosome A (97 aa).

The interval 1–49 (MDKQSSAGGVKRSVPCDSNEANEMMPETPTGDSDPQPAPKKMKTSESST) is disordered. A Nuclear localization signal motif is present at residues 37–45 (PAPKKMKTS).

It belongs to the SPAN-X family. As to expression, detected in testis and sperm.

The protein localises to the cytoplasm. The protein resides in the nucleus. In Homo sapiens (Human), this protein is Sperm protein associated with the nucleus on the X chromosome A.